Reading from the N-terminus, the 77-residue chain is Spermatid-specific protein T2 (77 aa).

A hydrophobic region spans residues 1-21 (MKVAANTSKMLVEKLDLLKGG). Residues 1–77 (MKVAANTSKM…YSRRRYRRRR (77 aa)) are disordered. The span at 20–77 (GGRRRRRRSRRRRRSRRRRSRSPYRRRYRRRRRRRRSRRRRRYRRRRSYSRRRYRRRR) shows a compositional bias: basic residues.

In terms of processing, phosphorylation occurs at different degrees. The triphosphorylated form may be predominant in T2. SP2 appears to be phosphorylated in elongated spermatids, but dephosphorylated in mature sperm cells. Testis.

The protein localises to the nucleus. Its subcellular location is the chromosome. Functionally, cuttlefish spermiogenesis is characterized by a double nuclear protein transition: histones -&gt; spermatid-specific proteins (T1/T2) -&gt; protamines (SP1/SP2). The protamines compact sperm DNA into a highly condensed, stable and inactive complex. In Sepia officinalis (Common cuttlefish), this protein is Spermatid-specific protein T2.